A 615-amino-acid polypeptide reads, in one-letter code: Vitamin B12 transporter BtuB (615 aa).

A signal peptide spans 1-20 (MIKKISLLTALSVTAFSGWA). A TonB box motif is present at residues 26-33 (NAMVVTAN). Residues 38–152 (PVNSVLAPTT…IGGVVNIITT (115 aa)) enclose the TBDR plug domain. Cyanocob(III)alamin-binding positions include Ser-85, Asn-92, and 110 to 111 (IS). The TBDR beta-barrel domain occupies 155–615 (KNGTTLNAGV…EYYLTGSYTF (461 aa)). The next 3 beta stranded transmembrane spans lie at 158-165 (TTLNAGVG), 169-178 (YQSYDAATQQ), and 184-195 (TTATLAGNYVYT). Ca(2+) is bound by residues Asp-199, Gln-210, Asp-212, and Asp-214. A run of 2 beta stranded transmembrane segments spans residues 216–226 (FMSKSLYGTVE) and 231–247 (DQFSGFLRGYGYDNRTD). Residues Tyr-248, Asp-249, and Asp-255 each contribute to the Ca(2+) site. 14 beta stranded membrane-spanning segments follow: residues 257–271 (RQLYSQTWDTGLRYQ), 273–290 (GIYSTQLIGSYSHSKDYD), 303–319 (TLVDSQQYNAQWGNVLQ), 322–331 (AGTVSAGVDW), 347–363 (ESQNNTGIYLTGQQRFA), 365–375 (IVLEGSVRGDD), 379–394 (FGWHNTWRTGASWEFI), 397–411 (YSLIASYGTAFKAPN), 429–438 (ESKQWESGVE), 444–453 (VIWRVSGYRN), 468–486 (VYENVGKAKIKGIEATASF), 490–505 (PVGHRISYDYVDSRNA), 513–525 (RRAKQQVKYQLDW), and 531–546 (DWSVTYQYLGSRYDKD). Thr-303 is a binding site for cyanocob(III)alamin. Arg-513 is a binding site for cyanocob(III)alamin. Position 547 (Tyr-547) interacts with cyanocob(III)alamin. 3 consecutive transmembrane segments (beta stranded) span residues 559 to 573 (TVKLGGVSLWDLAAS), 586 to 597 (IANLFDKDYETA), and 603 to 615 (AGREYYLTGSYTF). The short motif at 598 to 615 (YGYRTAGREYYLTGSYTF) is the TonB C-terminal box element.

Belongs to the TonB-dependent receptor family. BtuB (TC 1.B.14.3.1) subfamily.

The protein resides in the cell outer membrane. Functionally, involved in the active translocation of vitamin B12 (cyanocobalamin) across the outer membrane to the periplasmic space. It derives its energy for transport by interacting with the trans-periplasmic membrane protein TonB. The protein is Vitamin B12 transporter BtuB of Pectobacterium atrosepticum (strain SCRI 1043 / ATCC BAA-672) (Erwinia carotovora subsp. atroseptica).